We begin with the raw amino-acid sequence, 225 residues long: NAD(P)H-quinone oxidoreductase subunit K, chloroplastic (225 aa).

[4Fe-4S] cluster contacts are provided by cysteine 43, cysteine 44, cysteine 108, and cysteine 139.

It belongs to the complex I 20 kDa subunit family. As to quaternary structure, NDH is composed of at least 16 different subunits, 5 of which are encoded in the nucleus. The cofactor is [4Fe-4S] cluster.

It localises to the plastid. The protein localises to the chloroplast thylakoid membrane. It carries out the reaction a plastoquinone + NADH + (n+1) H(+)(in) = a plastoquinol + NAD(+) + n H(+)(out). The enzyme catalyses a plastoquinone + NADPH + (n+1) H(+)(in) = a plastoquinol + NADP(+) + n H(+)(out). Its function is as follows. NDH shuttles electrons from NAD(P)H:plastoquinone, via FMN and iron-sulfur (Fe-S) centers, to quinones in the photosynthetic chain and possibly in a chloroplast respiratory chain. The immediate electron acceptor for the enzyme in this species is believed to be plastoquinone. Couples the redox reaction to proton translocation, and thus conserves the redox energy in a proton gradient. This chain is NAD(P)H-quinone oxidoreductase subunit K, chloroplastic, found in Triticum aestivum (Wheat).